A 332-amino-acid polypeptide reads, in one-letter code: MAELFYDADADLSIIQGRKVAVIGYGSQGHAHALSLRDSGVDVRVGLHEGSKSKAKAEEQGLRVVPVAEAAAEADVIMILVPDPIQAEVYEKDIKDNLKDGDALFFGHGLNIRYGFIKPPAGVDVCMVAPKGPGHLVRRQYEEGRGVPCIAAVEQDATGNAFALALSYAKGIGGTRAGVIKTTFTEETETDLFGEQAVLCGGTAALVKAGFETLTEAGYQPEIAYFECLHELKLIVDLMYEGGLEKMRWSISETAEWGDYVTGPRIITDATKAEMKKVLAEIQDGTFAKNWMDEYHGGLKKYNEYKKQDSEHLLETTGKELRKLMSWVDEEA.

One can recognise a KARI N-terminal Rossmann domain in the interval 2–182; the sequence is AELFYDADAD…GGTRAGVIKT (181 aa). Residues 25–28, Ser51, Ser53, and 83–86 each bind NADP(+); these read YGSQ and DPIQ. The active site involves His108. Gly134 contributes to the NADP(+) binding site. One can recognise a KARI C-terminal knotted domain in the interval 183–328; sequence TFTEETETDL…KELRKLMSWV (146 aa). Residues Asp191, Glu195, Glu227, and Glu231 each contribute to the Mg(2+) site. Position 252 (Ser252) interacts with substrate.

This sequence belongs to the ketol-acid reductoisomerase family. It depends on Mg(2+) as a cofactor.

The catalysed reaction is (2R)-2,3-dihydroxy-3-methylbutanoate + NADP(+) = (2S)-2-acetolactate + NADPH + H(+). The enzyme catalyses (2R,3R)-2,3-dihydroxy-3-methylpentanoate + NADP(+) = (S)-2-ethyl-2-hydroxy-3-oxobutanoate + NADPH + H(+). The protein operates within amino-acid biosynthesis; L-isoleucine biosynthesis; L-isoleucine from 2-oxobutanoate: step 2/4. Its pathway is amino-acid biosynthesis; L-valine biosynthesis; L-valine from pyruvate: step 2/4. Its function is as follows. Involved in the biosynthesis of branched-chain amino acids (BCAA). Catalyzes an alkyl-migration followed by a ketol-acid reduction of (S)-2-acetolactate (S2AL) to yield (R)-2,3-dihydroxy-isovalerate. In the isomerase reaction, S2AL is rearranged via a Mg-dependent methyl migration to produce 3-hydroxy-3-methyl-2-ketobutyrate (HMKB). In the reductase reaction, this 2-ketoacid undergoes a metal-dependent reduction by NADPH to yield (R)-2,3-dihydroxy-isovalerate. The polypeptide is Ketol-acid reductoisomerase (NADP(+)) 1 (Streptomyces coelicolor (strain ATCC BAA-471 / A3(2) / M145)).